A 251-amino-acid polypeptide reads, in one-letter code: Endoglucanase CX (251 aa).

The protein belongs to the glycosyl hydrolase 9 (cellulase E) family.

The catalysed reaction is Endohydrolysis of (1-&gt;4)-beta-D-glucosidic linkages in cellulose, lichenin and cereal beta-D-glucans.. In terms of biological role, degrades carboxymethylcellulose (CMC). This is Endoglucanase CX from Prunus persica (Peach).